The sequence spans 151 residues: 4-hydroxybenzoyl-CoA thioesterase (151 aa).

Glutamate 73 is an active-site residue. Residue 100–102 (FFR) participates in substrate binding.

The protein belongs to the thioesterase PaaI family. As to quaternary structure, homotetramer.

It catalyses the reaction 4-hydroxybenzoyl-CoA + H2O = 4-hydroxybenzoate + CoA + H(+). It functions in the pathway xenobiotic degradation; 4-chlorobenzoate degradation; 4-hydroxybenzoate from 4-chlorobenzoate: step 3/3. This chain is 4-hydroxybenzoyl-CoA thioesterase, found in Arthrobacter globiformis.